Consider the following 139-residue polypeptide: Immunogenic miracidial antigen 8I (139 aa).

Residues 61–139 form a disordered region; sequence IDVGDEDYHD…PKKYGSGYKH (79 aa). Positions 64 to 85 are enriched in acidic residues; that stretch reads GDEDYHDGDDDVDYTDDVDDVD. Over residues 90–103 the composition is skewed to polar residues; the sequence is SPSQLLQGGYQRNQ.

It belongs to the immunogenic miracidial antigen family.

This chain is Immunogenic miracidial antigen 8I (8I), found in Schistosoma japonicum (Blood fluke).